The sequence spans 787 residues: ABC transporter G family member 5 (787 aa).

Residues 1 to 17 (MSRFVDKLPLFDRRPSP) are compositionally biased toward basic and acidic residues. Disordered stretches follow at residues 1-25 (MSRF…EGLP) and 71-116 (NDAR…EGQP). Residues 74-85 (RSGSSTPISSPR) show a composition bias toward polar residues. An ABC transporter domain is found at 121–382 (LKFTDLTYSV…FLDFGKPIPD (262 aa)). ATP is bound at residue 175–182 (GASGSGKS). The ABC transmembrane type-2 domain occupies 484–691 (GVLTRRAFIN…PYEAVMQNEF (208 aa)). Helical transmembrane passes span 500-520 (VFII…TIFW), 535-555 (FFAI…PVFL), 576-596 (VLSH…AFAL), 599-619 (FFSV…AIVL), 620-640 (ASFW…THVM), 641-661 (LGFP…GFFI), 728-745 (SLGV…GPDF), and 760-780 (LWIT…SLLL).

The protein belongs to the ABC transporter superfamily. ABCG family. Eye pigment precursor importer (TC 3.A.1.204) subfamily. In terms of tissue distribution, expressed in the crown root primordia, endodermis, pericycle and stele in the root, in leaf primordia of main and axillary shoots, and in the vascular cells and leaf epidermis of older leaves.

Its subcellular location is the cell membrane. Functionally, essential transporter for growth and development under abiotic stress. Mediates shoot branching by promoting the outgrowth of lateral shoots. Required for salt tolerance via Na/K homeostasis, at least partly by regulating SKC1/OsHKT1;5. Necessary for hypodermal suberization of roots, which contributes to formation of the apoplastic barrier. This is ABC transporter G family member 5 from Oryza sativa subsp. japonica (Rice).